The following is a 146-amino-acid chain: uncharacterized protein (146 aa).

This is an uncharacterized protein from Acidianus filamentous virus 1 (isolate United States/Yellowstone) (AFV-1).